A 125-amino-acid chain; its full sequence is Large ribosomal subunit protein bL12 (125 aa).

This sequence belongs to the bacterial ribosomal protein bL12 family. In terms of assembly, homodimer. Part of the ribosomal stalk of the 50S ribosomal subunit. Forms a multimeric L10(L12)X complex, where L10 forms an elongated spine to which 2 to 4 L12 dimers bind in a sequential fashion. Binds GTP-bound translation factors.

Forms part of the ribosomal stalk which helps the ribosome interact with GTP-bound translation factors. Is thus essential for accurate translation. In Methylibium petroleiphilum (strain ATCC BAA-1232 / LMG 22953 / PM1), this protein is Large ribosomal subunit protein bL12.